The following is a 311-amino-acid chain: Putative F-box protein At1g31090 (311 aa).

The F-box domain maps to 4 to 53; the sequence is GANSDSIPTDLIYEILSRLSVKPITRFRCVSKLWESIICRQDFTELFHNR. The interval 287 to 311 is disordered; the sequence is RPAEQNTSTSSREDHLVRTVKRKRA.

In Arabidopsis thaliana (Mouse-ear cress), this protein is Putative F-box protein At1g31090.